Reading from the N-terminus, the 635-residue chain is 1-deoxy-D-xylulose-5-phosphate synthase (635 aa).

Residues His72 and 113 to 115 (GHA) each bind thiamine diphosphate. Asp144 is a Mg(2+) binding site. Thiamine diphosphate contacts are provided by residues 145–146 (GA), Asn174, Tyr286, and Glu369. Asn174 contacts Mg(2+).

This sequence belongs to the transketolase family. DXPS subfamily. Homodimer. Mg(2+) is required as a cofactor. Requires thiamine diphosphate as cofactor.

The enzyme catalyses D-glyceraldehyde 3-phosphate + pyruvate + H(+) = 1-deoxy-D-xylulose 5-phosphate + CO2. The protein operates within metabolic intermediate biosynthesis; 1-deoxy-D-xylulose 5-phosphate biosynthesis; 1-deoxy-D-xylulose 5-phosphate from D-glyceraldehyde 3-phosphate and pyruvate: step 1/1. Catalyzes the acyloin condensation reaction between C atoms 2 and 3 of pyruvate and glyceraldehyde 3-phosphate to yield 1-deoxy-D-xylulose-5-phosphate (DXP). This chain is 1-deoxy-D-xylulose-5-phosphate synthase, found in Acaryochloris marina (strain MBIC 11017).